Reading from the N-terminus, the 255-residue chain is Hydroxyacylglutathione hydrolase (255 aa).

Zn(2+) contacts are provided by H56, H58, D60, H61, H114, D133, and H171.

Belongs to the metallo-beta-lactamase superfamily. Glyoxalase II family. Monomer. Zn(2+) is required as a cofactor.

The enzyme catalyses an S-(2-hydroxyacyl)glutathione + H2O = a 2-hydroxy carboxylate + glutathione + H(+). It participates in secondary metabolite metabolism; methylglyoxal degradation; (R)-lactate from methylglyoxal: step 2/2. Its function is as follows. Thiolesterase that catalyzes the hydrolysis of S-D-lactoyl-glutathione to form glutathione and D-lactic acid. In Nitrobacter winogradskyi (strain ATCC 25391 / DSM 10237 / CIP 104748 / NCIMB 11846 / Nb-255), this protein is Hydroxyacylglutathione hydrolase.